The sequence spans 258 residues: Eukaryotic translation initiation factor 3 subunit J (258 aa).

Over residues 1–11 (MAAAAAAAGDS) the composition is skewed to low complexity. Residues 1–108 (MAAAAAAAGD…LEEPEEPKVL (108 aa)) are disordered. Ala-2 carries the post-translational modification N-acetylalanine. Positions 2-69 (AAAAAAAGDS…KEEAEVKPEV (68 aa)) are sufficient for interaction with EIF3B. Phosphoserine is present on residues Ser-11, Ser-13, and Ser-20. The span at 40-59 (EGEDEDEDVKDNWDDDDDEK) shows a compositional bias: acidic residues. Residues 60–106 (KEEAEVKPEVKISEKKKIAEKIKEKERQQKKRQEEIKKRLEEPEEPK) show a composition bias toward basic and acidic residues. Residues 70 to 135 (KISEKKKIAE…ESDLELAKET (66 aa)) adopt a coiled-coil conformation. Residue Lys-106 forms a Glycyl lysine isopeptide (Lys-Gly) (interchain with G-Cter in SUMO2) linkage. At Thr-109 the chain carries Phosphothreonine. Phosphoserine is present on Ser-127. The disordered stretch occupies residues 217 to 238 (SKAKKKKKGVVPGGGLKATMKD). The segment at 243 to 258 (YGGYDGGYVQDYEDFM) is promotes stable association with the 40S ribosome. Phosphotyrosine is present on Tyr-254.

In terms of assembly, component of the eukaryotic translation initiation factor 3 (eIF-3) complex, which is composed of 13 subunits: EIF3A, EIF3B, EIF3C, EIF3D, EIF3E, EIF3F, EIF3G, EIF3H, EIF3I, EIF3J, EIF3K, EIF3L and EIF3M. The eIF-3 complex appears to include 3 stable modules: module A is composed of EIF3A, EIF3B, EIF3G and EIF3I; module B is composed of EIF3F, EIF3H, and EIF3M; and module C is composed of EIF3C, EIF3D, EIF3E, EIF3K and EIF3L. EIF3C of module C binds EIF3B of module A and EIF3H of module B, thereby linking the three modules. EIF3J is a labile subunit that binds to the eIF-3 complex via EIF3B. The eIF-3 complex interacts with RPS6KB1 under conditions of nutrient depletion. Mitogenic stimulation leads to binding and activation of a complex composed of MTOR and RPTOR, leading to phosphorylation and release of RPS6KB1 and binding of EIF4B to eIF-3. Phosphorylated. Phosphorylation is enhanced upon serum stimulation.

It is found in the cytoplasm. Functionally, component of the eukaryotic translation initiation factor 3 (eIF-3) complex, which is required for several steps in the initiation of protein synthesis. The eIF-3 complex associates with the 40S ribosome and facilitates the recruitment of eIF-1, eIF-1A, eIF-2:GTP:methionyl-tRNAi and eIF-5 to form the 43S pre-initiation complex (43S PIC). The eIF-3 complex stimulates mRNA recruitment to the 43S PIC and scanning of the mRNA for AUG recognition. The eIF-3 complex is also required for disassembly and recycling of post-termination ribosomal complexes and subsequently prevents premature joining of the 40S and 60S ribosomal subunits prior to initiation. The eIF-3 complex specifically targets and initiates translation of a subset of mRNAs involved in cell proliferation, including cell cycling, differentiation and apoptosis, and uses different modes of RNA stem-loop binding to exert either translational activation or repression. In Homo sapiens (Human), this protein is Eukaryotic translation initiation factor 3 subunit J.